The following is an 803-amino-acid chain: Pesticidal crystal protein Cry13Aa (803 aa).

This sequence belongs to the delta endotoxin family.

Endotoxin with nematicidal activity. The polypeptide is Pesticidal crystal protein Cry13Aa (cry13Aa) (Bacillus thuringiensis).